Consider the following 122-residue polypeptide: UPF0231 protein VV1_1657 (122 aa).

It belongs to the UPF0231 family.

This is UPF0231 protein VV1_1657 from Vibrio vulnificus (strain CMCP6).